The sequence spans 355 residues: D-alanine--D-alanine ligase (355 aa).

The region spanning Lys-143–Asp-350 is the ATP-grasp domain. Position 178-233 (Ile-178–Glu-233) interacts with ATP. The Mg(2+) site is built by Asp-303, Glu-317, and Asn-319.

Belongs to the D-alanine--D-alanine ligase family. Requires Mg(2+) as cofactor. It depends on Mn(2+) as a cofactor.

It localises to the cytoplasm. The catalysed reaction is 2 D-alanine + ATP = D-alanyl-D-alanine + ADP + phosphate + H(+). It functions in the pathway cell wall biogenesis; peptidoglycan biosynthesis. Functionally, cell wall formation. In Prochlorococcus marinus (strain MIT 9515), this protein is D-alanine--D-alanine ligase.